The sequence spans 239 residues: MARGCLCCLKYMMFLFNLIFWLCGCGLLGVGIWLSVSQGNFATFSPSFPSLSAANLVIVIGTVVMVTGFLGCLGAIKENKCLLLSFFIILLIILLTELILLILFFVYMDKVNENAKQDLKDGLLLYNSENNVGLKNAWNIIQAEMHCCGVTDYTDWYPVLGENTVPDRCCMENSQDCGHNSTSLVWKTGCYEKVKMWFDDNKHVLGTIGMCILIIQILGMAFSMTLFQQIHRTGKKYDA.

The Cytoplasmic segment spans residues 1-13 (MARGCLCCLKYMM). The chain crosses the membrane as a helical span at residues 14–34 (FLFNLIFWLCGCGLLGVGIWL). At 35–55 (SVSQGNFATFSPSFPSLSAAN) the chain is on the extracellular side. A helical membrane pass occupies residues 56–76 (LVIVIGTVVMVTGFLGCLGAI). At 77–85 (KENKCLLLS) the chain is on the cytoplasmic side. A helical transmembrane segment spans residues 86–106 (FFIILLIILLTELILLILFFV). Residues 107 to 203 (YMDKVNENAK…VKMWFDDNKH (97 aa)) are Extracellular-facing. Asn180 carries an N-linked (GlcNAc...) asparagine glycan. The helical transmembrane segment at 204–224 (VLGTIGMCILIIQILGMAFSM) threads the bilayer. The Cytoplasmic segment spans residues 225–239 (TLFQQIHRTGKKYDA).

It belongs to the tetraspanin (TM4SF) family.

It localises to the membrane. The chain is Tetraspanin-9 (tspan9) from Xenopus laevis (African clawed frog).